The following is a 197-amino-acid chain: CASP-like protein 1B1 (197 aa).

Alanine 2 carries the N-acetylalanine modification. Over 2–17 the chain is Cytoplasmic; that stretch reads AVSKLTLAATSGKSCK. A helical membrane pass occupies residues 18–38; that stretch reads ILLGLRLLAFSATLSAAIVMG. Residues 39–69 are Extracellular-facing; that stretch reads LNKETKTFIVGKVGNTPIQATFTAKFDHTPA. The chain crosses the membrane as a helical span at residues 70–90; sequence FVFFVVANAMVSFHNLLMIAL. The Cytoplasmic portion of the chain corresponds to 91–106; that stretch reads QIFGGKMEFTGFRLLS. The chain crosses the membrane as a helical span at residues 107-127; sequence VAILDMLNVTLISAAANAAAF. At 128 to 156 the chain is on the extracellular side; it reads MAEVGKNGNKHARWDKICDRFATYCDHGA. A helical transmembrane segment spans residues 157–177; that stretch reads GALIAAFAGVILMLIISAASI. Over 178-197 the chain is Cytoplasmic; the sequence is SRLVQPNKCCSTTASPSVVP.

Belongs to the Casparian strip membrane proteins (CASP) family. Homodimer and heterodimers.

The protein resides in the cell membrane. The protein is CASP-like protein 1B1 of Arabidopsis thaliana (Mouse-ear cress).